The following is a 59-amino-acid chain: Large ribosomal subunit protein uL30 (59 aa).

This sequence belongs to the universal ribosomal protein uL30 family. As to quaternary structure, part of the 50S ribosomal subunit.

This Leptospira borgpetersenii serovar Hardjo-bovis (strain JB197) protein is Large ribosomal subunit protein uL30.